Consider the following 344-residue polypeptide: Oxygen sensor histidine kinase NreB (344 aa).

Positions 58, 61, 73, and 76 each coordinate [4Fe-4S] cluster. The 193-residue stretch at 152–344 (RISRELHDSV…GTNVTLNIPI (193 aa)) folds into the Histidine kinase domain. A Phosphohistidine; by autocatalysis modification is found at His158.

The cofactor is [4Fe-4S] cluster. Autophosphorylated.

The protein localises to the cytoplasm. It carries out the reaction ATP + protein L-histidine = ADP + protein N-phospho-L-histidine.. In terms of biological role, member of the two-component regulatory system NreB/NreC involved in the control of dissimilatory nitrate/nitrite reduction in response to oxygen. NreB functions as a direct oxygen sensor histidine kinase which is autophosphorylated, in the absence of oxygen, probably at the conserved histidine residue, and transfers its phosphate group probably to a conserved aspartate residue of NreC. NreB/NreC activates the expression of the nitrate (narGHJI) and nitrite (nir) reductase operons, as well as the putative nitrate transporter gene narT. The sequence is that of Oxygen sensor histidine kinase NreB (nreB) from Staphylococcus aureus (strain Mu3 / ATCC 700698).